Consider the following 203-residue polypeptide: Small ribosomal subunit protein uS4c (203 aa).

Positions 15 to 43 (LGSLPGLTSKRPRSGSDLRNQSRSGKRSQ) are disordered. The S4 RNA-binding domain maps to 89 to 169 (MRLDNILFRL…LPKHLTLHSL (81 aa)).

This sequence belongs to the universal ribosomal protein uS4 family. Part of the 30S ribosomal subunit. Contacts protein S5. The interaction surface between S4 and S5 is involved in control of translational fidelity.

It localises to the plastid. It is found in the chloroplast. One of the primary rRNA binding proteins, it binds directly to 16S rRNA where it nucleates assembly of the body of the 30S subunit. Functionally, with S5 and S12 plays an important role in translational accuracy. The chain is Small ribosomal subunit protein uS4c (rps4) from Illicium oligandrum (Star anise).